A 245-amino-acid polypeptide reads, in one-letter code: tRNA pseudouridine synthase A (245 aa).

The active-site Nucleophile is the D52. Residue Y111 participates in substrate binding.

Belongs to the tRNA pseudouridine synthase TruA family. As to quaternary structure, homodimer.

The catalysed reaction is uridine(38/39/40) in tRNA = pseudouridine(38/39/40) in tRNA. Formation of pseudouridine at positions 38, 39 and 40 in the anticodon stem and loop of transfer RNAs. The polypeptide is tRNA pseudouridine synthase A (Nitrobacter hamburgensis (strain DSM 10229 / NCIMB 13809 / X14)).